We begin with the raw amino-acid sequence, 207 residues long: Dephospho-CoA kinase (207 aa).

Residues 4-203 form the DPCK domain; it reads VIGLTGGIAS…EEGYIEKPNY (200 aa). 12–17 provides a ligand contact to ATP; sequence ASGKST.

This sequence belongs to the CoaE family.

Its subcellular location is the cytoplasm. It carries out the reaction 3'-dephospho-CoA + ATP = ADP + CoA + H(+). Its pathway is cofactor biosynthesis; coenzyme A biosynthesis; CoA from (R)-pantothenate: step 5/5. Its function is as follows. Catalyzes the phosphorylation of the 3'-hydroxyl group of dephosphocoenzyme A to form coenzyme A. In Staphylococcus aureus (strain bovine RF122 / ET3-1), this protein is Dephospho-CoA kinase.